The primary structure comprises 160 residues: Ribosomal RNA large subunit methyltransferase H (160 aa).

S-adenosyl-L-methionine-binding positions include L77, G109, and 128–133 (LSNLTF).

This sequence belongs to the RNA methyltransferase RlmH family. Homodimer.

The protein resides in the cytoplasm. The catalysed reaction is pseudouridine(1915) in 23S rRNA + S-adenosyl-L-methionine = N(3)-methylpseudouridine(1915) in 23S rRNA + S-adenosyl-L-homocysteine + H(+). Specifically methylates the pseudouridine at position 1915 (m3Psi1915) in 23S rRNA. The polypeptide is Ribosomal RNA large subunit methyltransferase H (Desulforamulus reducens (strain ATCC BAA-1160 / DSM 100696 / MI-1) (Desulfotomaculum reducens)).